The following is an 813-amino-acid chain: Acyl-homoserine lactone acylase QuiP (813 aa).

The signal sequence occupies residues 1–26 (MAAPAFPPFRLRFATAATLLGMLGLA). The active-site Nucleophile is Ser262.

The protein belongs to the peptidase S45 family. As to quaternary structure, heterodimer of an alpha subunit and a beta subunit processed from the same precursor.

Its subcellular location is the periplasm. The catalysed reaction is an N-acyl-L-homoserine lactone + H2O = L-homoserine lactone + a carboxylate. Its function is as follows. Catalyzes the deacylation of acyl-homoserine lactone (AHL or acyl-HSL), releasing homoserine lactone (HSL) and the corresponding fatty acid. Possesses a specificity for the degradation of long-chain acyl-HSLs (side chains of seven or more carbons in length). The polypeptide is Acyl-homoserine lactone acylase QuiP (quiP) (Pseudomonas putida (strain ATCC 47054 / DSM 6125 / CFBP 8728 / NCIMB 11950 / KT2440)).